Reading from the N-terminus, the 188-residue chain is dCTP deaminase (188 aa).

DCTP is bound by residues 111-116 (KSTYAR), 135-137 (TLE), Gln156, Tyr170, and Gln180. Catalysis depends on Glu137, which acts as the Proton donor/acceptor.

It belongs to the dCTP deaminase family. As to quaternary structure, homotrimer.

It catalyses the reaction dCTP + H2O + H(+) = dUTP + NH4(+). It participates in pyrimidine metabolism; dUMP biosynthesis; dUMP from dCTP (dUTP route): step 1/2. Catalyzes the deamination of dCTP to dUTP. This chain is dCTP deaminase, found in Thiobacillus denitrificans (strain ATCC 25259 / T1).